Consider the following 157-residue polypeptide: Class 10 plant pathogenesis-related protein 2F (157 aa).

Asp8 is a trans-zeatin binding site. Ca(2+)-binding residues include Pro32, Val35, and Ile38. Residues Glu60, His69, Tyr81, and Tyr83 each contribute to the trans-zeatin site.

It belongs to the BetVI family.

It localises to the cytoplasm. The protein resides in the cytosol. In terms of biological role, class II ribonuclease (RNase). Binds to cytokinins. Interacts with melatonin. This is Class 10 plant pathogenesis-related protein 2F from Lupinus luteus (European yellow lupine).